The primary structure comprises 131 residues: Small ribosomal subunit protein uS8 (131 aa).

This sequence belongs to the universal ribosomal protein uS8 family. As to quaternary structure, part of the 30S ribosomal subunit. Contacts proteins S5 and S12.

Functionally, one of the primary rRNA binding proteins, it binds directly to 16S rRNA central domain where it helps coordinate assembly of the platform of the 30S subunit. This Campylobacter hominis (strain ATCC BAA-381 / DSM 21671 / CCUG 45161 / LMG 19568 / NCTC 13146 / CH001A) protein is Small ribosomal subunit protein uS8.